A 357-amino-acid polypeptide reads, in one-letter code: Peptide chain release factor 1 (357 aa).

An N5-methylglutamine modification is found at Q236.

It belongs to the prokaryotic/mitochondrial release factor family. Post-translationally, methylated by PrmC. Methylation increases the termination efficiency of RF1.

It is found in the cytoplasm. In terms of biological role, peptide chain release factor 1 directs the termination of translation in response to the peptide chain termination codons UAG and UAA. This chain is Peptide chain release factor 1, found in Mycobacterium marinum (strain ATCC BAA-535 / M).